Reading from the N-terminus, the 354-residue chain is Protein RecA (354 aa).

67–74 (GPESSGKT) contributes to the ATP binding site.

This sequence belongs to the RecA family.

The protein resides in the cytoplasm. Can catalyze the hydrolysis of ATP in the presence of single-stranded DNA, the ATP-dependent uptake of single-stranded DNA by duplex DNA, and the ATP-dependent hybridization of homologous single-stranded DNAs. It interacts with LexA causing its activation and leading to its autocatalytic cleavage. This is Protein RecA from Hamiltonella defensa subsp. Acyrthosiphon pisum (strain 5AT).